The following is a 496-amino-acid chain: Glycerol kinase (496 aa).

Thr11 is a binding site for ADP. Residues Thr11, Thr12, and Ser13 each coordinate ATP. Thr11 is a binding site for sn-glycerol 3-phosphate. Arg15 provides a ligand contact to ADP. 4 residues coordinate sn-glycerol 3-phosphate: Arg81, Glu82, Tyr133, and Asp242. Residues Arg81, Glu82, Tyr133, Asp242, and Gln243 each contribute to the glycerol site. Residues Thr264 and Gly307 each coordinate ADP. ATP contacts are provided by Thr264, Gly307, and Gln311. Asn413 serves as a coordination point for ADP.

Belongs to the FGGY kinase family.

It catalyses the reaction glycerol + ATP = sn-glycerol 3-phosphate + ADP + H(+). It functions in the pathway polyol metabolism; glycerol degradation via glycerol kinase pathway; sn-glycerol 3-phosphate from glycerol: step 1/1. Inhibited by fructose 1,6-bisphosphate (FBP). Key enzyme in the regulation of glycerol uptake and metabolism. Catalyzes the phosphorylation of glycerol to yield sn-glycerol 3-phosphate. This is Glycerol kinase from Borrelia duttonii (strain Ly).